A 524-amino-acid polypeptide reads, in one-letter code: 3-epi-6-deoxocathasterone 23-monooxygenase CYP90C1 (524 aa).

A helical membrane pass occupies residues 25–45 (YLVAGFLVLTAGILLRPWLWL). A heme-binding site is contributed by Cys463.

Belongs to the cytochrome P450 family. Heme serves as cofactor. As to expression, widely expressed.

It localises to the endoplasmic reticulum membrane. It catalyses the reaction 3-epi-6-deoxocathasterone + reduced [NADPH--hemoprotein reductase] + O2 = 6-deoxotyphasterol + oxidized [NADPH--hemoprotein reductase] + H2O + H(+). It carries out the reaction (22S,24R)-22-hydroxy-5alpha-ergostan-3-one + reduced [NADPH--hemoprotein reductase] + O2 = 3-dehydro-6-deoxoteasterone + oxidized [NADPH--hemoprotein reductase] + H2O + H(+). It functions in the pathway plant hormone biosynthesis; brassinosteroid biosynthesis. Involved in brassinosteroid (BR) biosynthesis. Converts typhasterol (TY) to cathasterone (CS) and 6-deoxotyphasterol (6-deoxoTY) to 6-deoxocathasterone (6-deoxoCT). C-23 hydroxylase that converts directly (22S,24R)-22-hydroxy-5-alpha-ergostan-3-one and 3-epi-6-deoxocathasterone to 3-dehydro-6-deoxoteasterone (6-deoxo3DT, 6-deoxo3DHT) and 6-deoxotyphasterol (6-deoxoTY), respectively. These C-23 hydroxylation shortcuts bypass campestanol, 6-deoxocathasterone, and 6-deoxoteasterone (6-deoxoTE). Also catalyzes the conversion of cathasterone to teasterone (TE), (22S,24R)-22-hydroxyergost-4-en-3-one (22-OH-4-en-3-one) to (22R,23R)-22,23-dihydroxy-campest-4-en-3-one (22,23-diOH-4-en-3-one) and (22S)-22-hydroxycampesterol (22-OHCR) to (22R,23R)-22,23-dihydroxycampesterol (22,23-diOHCR). Required for the regulation of polar elongation of leaf cells. Required for the longitudinal elongation of floral organs. The sequence is that of 3-epi-6-deoxocathasterone 23-monooxygenase CYP90C1 from Arabidopsis thaliana (Mouse-ear cress).